A 293-amino-acid polypeptide reads, in one-letter code: 4-hydroxy-tetrahydrodipicolinate synthase (293 aa).

Position 45 (threonine 45) interacts with pyruvate. Tyrosine 133 acts as the Proton donor/acceptor in catalysis. Lysine 161 functions as the Schiff-base intermediate with substrate in the catalytic mechanism. Isoleucine 203 provides a ligand contact to pyruvate.

It belongs to the DapA family. Homotetramer; dimer of dimers.

The protein resides in the cytoplasm. It carries out the reaction L-aspartate 4-semialdehyde + pyruvate = (2S,4S)-4-hydroxy-2,3,4,5-tetrahydrodipicolinate + H2O + H(+). It participates in amino-acid biosynthesis; L-lysine biosynthesis via DAP pathway; (S)-tetrahydrodipicolinate from L-aspartate: step 3/4. Its function is as follows. Catalyzes the condensation of (S)-aspartate-beta-semialdehyde [(S)-ASA] and pyruvate to 4-hydroxy-tetrahydrodipicolinate (HTPA). The protein is 4-hydroxy-tetrahydrodipicolinate synthase of Exiguobacterium sibiricum (strain DSM 17290 / CCUG 55495 / CIP 109462 / JCM 13490 / 255-15).